We begin with the raw amino-acid sequence, 318 residues long: D-alanine--D-alanine ligase B (318 aa).

Residues 117–315 enclose the ATP-grasp domain; it reads KQVWLSLGLS…FEALVWRVLE (199 aa). ATP is bound at residue 146 to 201; that stretch reads AEQIGLPVIVKPANEGSSVGVSRVFDQAQLDEAVTLAARYDGALLMEQLIEGDELT. 3 residues coordinate Mg(2+): Asp268, Glu282, and Asn284.

It belongs to the D-alanine--D-alanine ligase family. It depends on Mg(2+) as a cofactor. Mn(2+) serves as cofactor.

The protein localises to the cytoplasm. The enzyme catalyses 2 D-alanine + ATP = D-alanyl-D-alanine + ADP + phosphate + H(+). Its pathway is cell wall biogenesis; peptidoglycan biosynthesis. In terms of biological role, cell wall formation. The chain is D-alanine--D-alanine ligase B from Xanthomonas campestris pv. campestris (strain ATCC 33913 / DSM 3586 / NCPPB 528 / LMG 568 / P 25).